We begin with the raw amino-acid sequence, 783 residues long: LPS-assembly protein LptD (783 aa).

The N-terminal stretch at 1-24 (MKKNYYSLISFSIFTALYSTAGFA) is a signal peptide.

This sequence belongs to the LptD family. In terms of assembly, component of the lipopolysaccharide transport and assembly complex. Interacts with LptE and LptA.

It localises to the cell outer membrane. Its function is as follows. Together with LptE, is involved in the assembly of lipopolysaccharide (LPS) at the surface of the outer membrane. The protein is LPS-assembly protein LptD of Mannheimia succiniciproducens (strain KCTC 0769BP / MBEL55E).